The following is a 183-amino-acid chain: Large ribosomal subunit protein bL27m (183 aa).

Residues 1–34 constitute a mitochondrion transit peptide; the sequence is MFLRPTSIPSAVSQIRAQLFAGPSSLASQIQVRW.

The protein belongs to the bacterial ribosomal protein bL27 family.

It is found in the mitochondrion. The polypeptide is Large ribosomal subunit protein bL27m (RPL27) (Cryptococcus neoformans var. neoformans serotype D (strain B-3501A) (Filobasidiella neoformans)).